We begin with the raw amino-acid sequence, 399 residues long: MTALPVTNRDTLPNLYDLSLAEMERLLTDWGQPTYRARQVFRQLYVNLADTPLAMTDLPLALRERLANETRLAPVTPEQVQTADNGLTRKALFRLPNGALVESVLMIYLDRATVCVSTQAGCAMGCVFCATGTLGLLRNLSPGEIVAQVVWAAREMRRLAGRPPRPTMRQPEDDAWWSPDDLENDAPSVPEVSSVSHVTNIVFMGMGEPFATYDRWWRAVEIIHDPRGLNIGARSMTVSTVGLVPGIRRLATETLPINLAVSLHAPDDDLRSALMPINRRYPLAVLLDATRDYLAATGRRVSFEYVLLQGKNDEPEHAAKLAALLRGEAGPAGLPLHLVHVNLIPWNPVPGMPLGRSERRRVLTFQRILRERGIACTVRVERGVAIAAACGQLAGGVAC.

The Proton acceptor role is filled by Glu-102. In terms of domain architecture, Radical SAM core spans 108 to 385; it reads YLDRATVCVS…CTVRVERGVA (278 aa). Residues Cys-115 and Cys-390 are joined by a disulfide bond. Positions 122, 126, and 129 each coordinate [4Fe-4S] cluster. S-adenosyl-L-methionine is bound by residues 207–208, Ser-239, 262–264, and Asn-347; these read GE and SLH. Cys-390 (S-methylcysteine intermediate) is an active-site residue.

Belongs to the radical SAM superfamily. RlmN family. [4Fe-4S] cluster is required as a cofactor.

The protein localises to the cytoplasm. The enzyme catalyses adenosine(2503) in 23S rRNA + 2 reduced [2Fe-2S]-[ferredoxin] + 2 S-adenosyl-L-methionine = 2-methyladenosine(2503) in 23S rRNA + 5'-deoxyadenosine + L-methionine + 2 oxidized [2Fe-2S]-[ferredoxin] + S-adenosyl-L-homocysteine. It carries out the reaction adenosine(37) in tRNA + 2 reduced [2Fe-2S]-[ferredoxin] + 2 S-adenosyl-L-methionine = 2-methyladenosine(37) in tRNA + 5'-deoxyadenosine + L-methionine + 2 oxidized [2Fe-2S]-[ferredoxin] + S-adenosyl-L-homocysteine. In terms of biological role, specifically methylates position 2 of adenine 2503 in 23S rRNA and position 2 of adenine 37 in tRNAs. The protein is Probable dual-specificity RNA methyltransferase RlmN of Roseiflexus castenholzii (strain DSM 13941 / HLO8).